The primary structure comprises 402 residues: Beta-ketoacyl-[acyl-carrier-protein] synthase III B, chloroplastic (402 aa).

Catalysis depends on residues Cys178, His328, and Asn358.

It belongs to the thiolase-like superfamily. FabH family.

The protein resides in the plastid. It is found in the chloroplast. The catalysed reaction is malonyl-[ACP] + acetyl-CoA + H(+) = 3-oxobutanoyl-[ACP] + CO2 + CoA. The protein operates within lipid metabolism; fatty acid biosynthesis. Its function is as follows. Catalyzes the condensation reaction of fatty acid synthesis by the addition to an acyl acceptor of two carbons from malonyl-ACP. KAS III catalyzes the first condensation reaction which initiates fatty acid synthesis and may therefore play a role in governing the total rate of fatty acid production. Possesses both acetoacetyl-ACP synthase and acetyl transacylase activities. This is Beta-ketoacyl-[acyl-carrier-protein] synthase III B, chloroplastic (KAS3B) from Cuphea wrightii (Wright's waxweed).